A 371-amino-acid polypeptide reads, in one-letter code: Chaperone protein DnaJ (371 aa).

Residues 5 to 70 (DYYEVLGVNR…QKRAAYDQYG (66 aa)) form the J domain. A disordered region spans residues 31–52 (KYHPDRNPDNPKAEESFKEAKE). A compositionally biased stretch (basic and acidic residues) spans 32–52 (YHPDRNPDNPKAEESFKEAKE). Residues 132–210 (RTETKIRIPV…CQGAGRVKKH (79 aa)) form a CR-type zinc finger. Positions 145, 148, 162, 165, 184, 187, 198, and 201 each coordinate Zn(2+). CXXCXGXG motif repeat units lie at residues 145-152 (CETCHGSG), 162-169 (CTTCGGHG), 184-191 (CPKCHGSG), and 198-205 (CPSCQGAG).

Belongs to the DnaJ family. In terms of assembly, homodimer. The cofactor is Zn(2+).

The protein resides in the cytoplasm. Its function is as follows. Participates actively in the response to hyperosmotic and heat shock by preventing the aggregation of stress-denatured proteins and by disaggregating proteins, also in an autonomous, DnaK-independent fashion. Unfolded proteins bind initially to DnaJ; upon interaction with the DnaJ-bound protein, DnaK hydrolyzes its bound ATP, resulting in the formation of a stable complex. GrpE releases ADP from DnaK; ATP binding to DnaK triggers the release of the substrate protein, thus completing the reaction cycle. Several rounds of ATP-dependent interactions between DnaJ, DnaK and GrpE are required for fully efficient folding. Also involved, together with DnaK and GrpE, in the DNA replication of plasmids through activation of initiation proteins. This Methylovorus sp. (strain SS1 / DSM 11726) protein is Chaperone protein DnaJ.